We begin with the raw amino-acid sequence, 126 residues long: SH2 domain-containing protein 1A (126 aa).

One can recognise an SH2 domain in the interval 6-104 (VYHGKISRET…VTPLQYPVEK (99 aa)). The segment at 67–92 (ETAPGVHKRFFRKVKNLISAFQKPDQ) is interaction with FYN SH3 domain. An N6-acetyllysine modification is found at K89. Positions 100–126 (YPVEKSSGRGPQAPTGRRDSDICLNAP) are disordered.

Interacts with CD84, CD244, LY9, SLAMF1 and FYN. Interacts with NTRK1, NTRK2 and NTRK3. T-cells.

The protein resides in the cytoplasm. In terms of biological role, cytoplasmic adapter regulating receptors of the signaling lymphocytic activation molecule (SLAM) family such as SLAMF1, CD244, LY9, CD84, SLAMF6 and SLAMF7. In SLAM signaling seems to cooperate with SH2D1B/EAT-2. Initially it has been proposed that association with SLAMF1 prevents SLAMF1 binding to inhibitory effectors including INPP5D/SHIP1 and PTPN11/SHP-2. However, by simultaneous interactions, recruits FYN which subsequently phosphorylates and activates SLAMF1. Positively regulates CD244/2B4- and CD84-mediated natural killer (NK) cell functions. Can also promote CD48-, SLAMF6 -, LY9-, and SLAMF7-mediated NK cell activation. In the context of NK cell-mediated cytotoxicity enhances conjugate formation with target cells. May also regulate the activity of the neurotrophin receptors NTRK1, NTRK2 and NTRK3. This chain is SH2 domain-containing protein 1A (Sh2d1a), found in Mus musculus (Mouse).